The primary structure comprises 144 residues: uncharacterized protein (144 aa).

A signal peptide spans 1 to 16 (MRKFLIVLLLPLLVLA).

This is an uncharacterized protein from Aquifex aeolicus (strain VF5).